A 108-amino-acid polypeptide reads, in one-letter code: Gibberellin-regulated protein 7 (108 aa).

Positions 1 to 23 are cleaved as a signal peptide; it reads MKIIVSILVLASLLLISSSLASA.

It belongs to the GASA family. In terms of processing, six disulfide bonds may be present.

Its subcellular location is the secreted. Gibberellin-regulated protein that may function in hormonal controlled steps of development such as seed germination, flowering and seed maturation. The protein is Gibberellin-regulated protein 7 (GASA7) of Arabidopsis thaliana (Mouse-ear cress).